The sequence spans 295 residues: Acetylglutamate kinase (295 aa).

Substrate-binding positions include 66 to 67 (GG), Arg-88, and Asn-193.

It belongs to the acetylglutamate kinase family. ArgB subfamily.

The protein resides in the cytoplasm. The catalysed reaction is N-acetyl-L-glutamate + ATP = N-acetyl-L-glutamyl 5-phosphate + ADP. The protein operates within amino-acid biosynthesis; L-arginine biosynthesis; N(2)-acetyl-L-ornithine from L-glutamate: step 2/4. Catalyzes the ATP-dependent phosphorylation of N-acetyl-L-glutamate. The sequence is that of Acetylglutamate kinase from Gluconobacter oxydans (strain 621H) (Gluconobacter suboxydans).